A 291-amino-acid polypeptide reads, in one-letter code: N-acetylmannosamine kinase (291 aa).

ATP contacts are provided by residues 5–12 (AIDIGGTK) and 132–139 (GVGGGVVS). Residues His156, Cys166, Cys168, and Cys173 each contribute to the Zn(2+) site.

This sequence belongs to the ROK (NagC/XylR) family. NanK subfamily. In terms of assembly, homodimer.

The enzyme catalyses an N-acyl-D-mannosamine + ATP = an N-acyl-D-mannosamine 6-phosphate + ADP + H(+). Its pathway is amino-sugar metabolism; N-acetylneuraminate degradation; D-fructose 6-phosphate from N-acetylneuraminate: step 2/5. Its function is as follows. Catalyzes the phosphorylation of N-acetylmannosamine (ManNAc) to ManNAc-6-P. This Escherichia fergusonii (strain ATCC 35469 / DSM 13698 / CCUG 18766 / IAM 14443 / JCM 21226 / LMG 7866 / NBRC 102419 / NCTC 12128 / CDC 0568-73) protein is N-acetylmannosamine kinase.